The primary structure comprises 308 residues: GATA transcription factor 10 (308 aa).

The GATA-type zinc-finger motif lies at 214-268; that stretch reads DGIVRICTHCETITTPQWRQGPSGPKTLCNACGVRFKSGRLVPEYRPASSPTFIP.

This sequence belongs to the type IV zinc-finger family. Class A subfamily.

It localises to the nucleus. Its function is as follows. Transcriptional activator that specifically binds 5'-GATA-3' or 5'-GAT-3' motifs within gene promoters. May be involved in the regulation of some light-responsive genes. The chain is GATA transcription factor 10 (GATA10) from Arabidopsis thaliana (Mouse-ear cress).